Here is a 336-residue protein sequence, read N- to C-terminus: Adenylosuccinate synthetase (336 aa).

Residues 12-18 and 42-44 each bind GTP; these read GDEGKGK and GHS. Aspartate 13 functions as the Proton acceptor in the catalytic mechanism. Aspartate 13 and glycine 42 together coordinate Mg(2+). Residues 13–16, 40–43, threonine 127, arginine 141, glutamine 179, threonine 194, and arginine 256 each bind IMP; these read DEGK and NAGH. The Proton donor role is filled by histidine 43. 252 to 258 serves as a coordination point for substrate; the sequence is TVTGRRR. Residues arginine 258, 284-286, and 324-326 each bind GTP; these read CLD and STG.

This sequence belongs to the adenylosuccinate synthetase family. As to quaternary structure, homodimer. Requires Mg(2+) as cofactor.

The protein localises to the cytoplasm. It carries out the reaction IMP + L-aspartate + GTP = N(6)-(1,2-dicarboxyethyl)-AMP + GDP + phosphate + 2 H(+). The protein operates within purine metabolism; AMP biosynthesis via de novo pathway; AMP from IMP: step 1/2. Plays an important role in the de novo pathway of purine nucleotide biosynthesis. Catalyzes the first committed step in the biosynthesis of AMP from IMP. This Methanococcus aeolicus (strain ATCC BAA-1280 / DSM 17508 / OCM 812 / Nankai-3) protein is Adenylosuccinate synthetase.